A 348-amino-acid polypeptide reads, in one-letter code: Phospho-N-acetylmuramoyl-pentapeptide-transferase (348 aa).

10 consecutive transmembrane segments (helical) span residues 11 to 31, 68 to 88, 92 to 112, 128 to 148, 165 to 185, 196 to 216, 222 to 242, 251 to 271, 276 to 296, and 326 to 346; these read SWMLLLATVFGLAFFLGIFLG, AGGILFCIVLLTTVFLWLPLG, TWLFVFLIISWGTLGWYDDII, FVIQLIISAITIVTIFSIYKG, VGHSILGKFFYFVLAMLTIVG, LDGLAAGTTCMSALGLLVVAL, PLAQDVSIVLSALIGISFAFL, VFMGDTGSLLIGGVLGSCAVM, LLLILLGGVFVAEAGSVILQV, and VVARFYIAGLLCMILGIIAAL.

This sequence belongs to the glycosyltransferase 4 family. MraY subfamily. It depends on Mg(2+) as a cofactor.

It is found in the cell inner membrane. It carries out the reaction UDP-N-acetyl-alpha-D-muramoyl-L-alanyl-gamma-D-glutamyl-meso-2,6-diaminopimeloyl-D-alanyl-D-alanine + di-trans,octa-cis-undecaprenyl phosphate = di-trans,octa-cis-undecaprenyl diphospho-N-acetyl-alpha-D-muramoyl-L-alanyl-D-glutamyl-meso-2,6-diaminopimeloyl-D-alanyl-D-alanine + UMP. It functions in the pathway cell wall biogenesis; peptidoglycan biosynthesis. Catalyzes the initial step of the lipid cycle reactions in the biosynthesis of the cell wall peptidoglycan: transfers peptidoglycan precursor phospho-MurNAc-pentapeptide from UDP-MurNAc-pentapeptide onto the lipid carrier undecaprenyl phosphate, yielding undecaprenyl-pyrophosphoryl-MurNAc-pentapeptide, known as lipid I. The sequence is that of Phospho-N-acetylmuramoyl-pentapeptide-transferase from Chlamydia caviae (strain ATCC VR-813 / DSM 19441 / 03DC25 / GPIC) (Chlamydophila caviae).